Consider the following 690-residue polypeptide: Elongation factor G (690 aa).

Residues 8-283 enclose the tr-type G domain; it reads EDYRNFGIMA…AVVAYLPSPL (276 aa). GTP is bound by residues 17–24, 81–85, and 135–138; these read AHIDAGKT, DTPGH, and NKMD.

This sequence belongs to the TRAFAC class translation factor GTPase superfamily. Classic translation factor GTPase family. EF-G/EF-2 subfamily.

The protein resides in the cytoplasm. Its function is as follows. Catalyzes the GTP-dependent ribosomal translocation step during translation elongation. During this step, the ribosome changes from the pre-translocational (PRE) to the post-translocational (POST) state as the newly formed A-site-bound peptidyl-tRNA and P-site-bound deacylated tRNA move to the P and E sites, respectively. Catalyzes the coordinated movement of the two tRNA molecules, the mRNA and conformational changes in the ribosome. The polypeptide is Elongation factor G (Nitrobacter winogradskyi (strain ATCC 25391 / DSM 10237 / CIP 104748 / NCIMB 11846 / Nb-255)).